A 285-amino-acid polypeptide reads, in one-letter code: Pantothenate synthetase (285 aa).

An ATP-binding site is contributed by 30-37 (MGNLHDGH). Residue His-37 is the Proton donor of the active site. Gln-61 contacts (R)-pantoate. Gln-61 is a beta-alanine binding site. Residue 149-152 (GEKD) coordinates ATP. Gln-155 is a binding site for (R)-pantoate. Residues Ile-178 and 186-189 (LSSR) each bind ATP.

This sequence belongs to the pantothenate synthetase family. As to quaternary structure, homodimer.

It localises to the cytoplasm. It carries out the reaction (R)-pantoate + beta-alanine + ATP = (R)-pantothenate + AMP + diphosphate + H(+). It participates in cofactor biosynthesis; (R)-pantothenate biosynthesis; (R)-pantothenate from (R)-pantoate and beta-alanine: step 1/1. In terms of biological role, catalyzes the condensation of pantoate with beta-alanine in an ATP-dependent reaction via a pantoyl-adenylate intermediate. The chain is Pantothenate synthetase from Buchnera aphidicola subsp. Acyrthosiphon pisum (strain Tuc7).